The primary structure comprises 241 residues: Pyridoxine 5'-phosphate synthase (241 aa).

3-amino-2-oxopropyl phosphate is bound at residue Asn-7. 9–10 (DH) provides a ligand contact to 1-deoxy-D-xylulose 5-phosphate. Arg-18 contributes to the 3-amino-2-oxopropyl phosphate binding site. The active-site Proton acceptor is the His-43. The 1-deoxy-D-xylulose 5-phosphate site is built by Arg-45 and His-50. The active-site Proton acceptor is Glu-70. Thr-100 is a 1-deoxy-D-xylulose 5-phosphate binding site. His-191 functions as the Proton donor in the catalytic mechanism. 3-amino-2-oxopropyl phosphate is bound by residues Gly-192 and 213–214 (GH).

Belongs to the PNP synthase family. As to quaternary structure, homooctamer; tetramer of dimers.

It is found in the cytoplasm. It carries out the reaction 3-amino-2-oxopropyl phosphate + 1-deoxy-D-xylulose 5-phosphate = pyridoxine 5'-phosphate + phosphate + 2 H2O + H(+). It functions in the pathway cofactor biosynthesis; pyridoxine 5'-phosphate biosynthesis; pyridoxine 5'-phosphate from D-erythrose 4-phosphate: step 5/5. In terms of biological role, catalyzes the complicated ring closure reaction between the two acyclic compounds 1-deoxy-D-xylulose-5-phosphate (DXP) and 3-amino-2-oxopropyl phosphate (1-amino-acetone-3-phosphate or AAP) to form pyridoxine 5'-phosphate (PNP) and inorganic phosphate. The sequence is that of Pyridoxine 5'-phosphate synthase from Nitratidesulfovibrio vulgaris (strain ATCC 29579 / DSM 644 / CCUG 34227 / NCIMB 8303 / VKM B-1760 / Hildenborough) (Desulfovibrio vulgaris).